Consider the following 233-residue polypeptide: Large ribosomal subunit protein uL1 (233 aa).

This sequence belongs to the universal ribosomal protein uL1 family. In terms of assembly, part of the 50S ribosomal subunit.

Binds directly to 23S rRNA. The L1 stalk is quite mobile in the ribosome, and is involved in E site tRNA release. Functionally, protein L1 is also a translational repressor protein, it controls the translation of the L11 operon by binding to its mRNA. In Shewanella loihica (strain ATCC BAA-1088 / PV-4), this protein is Large ribosomal subunit protein uL1.